The chain runs to 278 residues: Elongation factor Ts 1, mitochondrial (278 aa).

Belongs to the EF-Ts family.

It localises to the mitochondrion. Its function is as follows. Associates with the EF-Tu.GDP complex and induces the exchange of GDP to GTP. It remains bound to the aminoacyl-tRNA.EF-Tu.GTP complex up to the GTP hydrolysis stage on the ribosome. In Trypanosoma cruzi (strain CL Brener), this protein is Elongation factor Ts 1, mitochondrial.